We begin with the raw amino-acid sequence, 222 residues long: MLTVSLLTLSLAAYASAVATVTDANNFMDAVLHTRIPALITSEPILFPFATIPPFNFTVAGTNILTNRELQVNVSRGEIRGFSTEVKRVGDCMPPVLREGKTSIRCTLNFTGINATFDTHTRGDNIVASDKNIWVRASVIDTTGQFEAVAERGKQGNVHTFLVDKIHVKVKNDKALSLNDKRKKKFRQHFEDKVLTVLPQIFYGAYLHLLGAAVSSVPFPHV.

The N-terminal stretch at 1-17 is a signal peptide; it reads MLTVSLLTLSLAAYASA. Asn-56, Asn-73, Asn-109, and Asn-114 each carry an N-linked (GlcNAc...) asparagine glycan.

In terms of tissue distribution, salivary gland (at protein level). Adult midgut.

It localises to the secreted. Inhibits host coagulation by delaying thrombin generation and reducing endogenous thrombin potential (ETP). In Ixodes scapularis (Black-legged tick), this protein is Salivary anticoagulant protein P23.